The chain runs to 169 residues: Cell division inhibitor SulA (169 aa).

The segment at 106–112 (ALRTGNY) is ftsZ binding. A lon protease binding region spans residues 162-169 (KIHSNLYH).

The protein belongs to the SulA family. In terms of assembly, interacts with FtsZ. In terms of processing, is rapidly cleaved and degraded by the Lon protease once DNA damage is repaired.

Functionally, component of the SOS system and an inhibitor of cell division. Accumulation of SulA causes rapid cessation of cell division and the appearance of long, non-septate filaments. In the presence of GTP, binds a polymerization-competent form of FtsZ in a 1:1 ratio, thus inhibiting FtsZ polymerization and therefore preventing it from participating in the assembly of the Z ring. This mechanism prevents the premature segregation of damaged DNA to daughter cells during cell division. This Salmonella dublin (strain CT_02021853) protein is Cell division inhibitor SulA.